Reading from the N-terminus, the 478-residue chain is POU domain, class 2, transcription factor 2 (478 aa).

Disordered regions lie at residues 1 to 82 (MVHS…PPQA), 167 to 199 (QAVT…EASD), 275 to 298 (SSLP…GRRR), 357 to 391 (PCSA…PLSQ), and 409 to 478 (TLHP…PYQP). A compositionally biased stretch (basic and acidic residues) spans 12–37 (RMSKPLEAEKQGLDSPSEHTDTERNG). Positions 38–60 (PDTNHQNPQNKTSPFSVSPTGPS) are enriched in polar residues. One can recognise a POU-specific domain in the interval 195 to 269 (EEASDLEELE…LLEKWLNDAE (75 aa)). A compositionally biased stretch (polar residues) spans 275-285 (SSLPSPNQLSR). The homeobox DNA-binding region spans 297–356 (RRKKRTSIETNVRFALEKSFLANQKPTSEEILLIAEQLHMEKEVIRVWFCNRRQKEKRIN). The leucine-zipper stretch occupies residues 389-410 (LSQASSSLSTTVTTLSSAVGTL). Over residues 416-425 (AGGGAAGGGA) the composition is skewed to gly residues.

It belongs to the POU transcription factor family. Class-2 subfamily. In terms of assembly, interacts with NR3C1, AR and PGR. Interacts with POU2AF1; the interaction increases POU2F2 transactivation activity. Predominantly expressed in B-cells.

It is found in the nucleus. Transactivation activity is enhanced by transcriptional coactivator POU2AF1. In terms of biological role, transcription factor that specifically binds to the octamer motif (5'-ATTTGCAT-3'). Regulates IL6 expression in B cells with POU2AF1. Regulates transcription in a number of tissues in addition to activating immunoglobulin gene expression. Modulates transcription transactivation by NR3C1, AR and PGR. This is POU domain, class 2, transcription factor 2 (POU2F2) from Sus scrofa (Pig).